The chain runs to 125 residues: Phosphoribosyl-AMP cyclohydrolase (125 aa).

D74 is a binding site for Mg(2+). C75 lines the Zn(2+) pocket. Residues D76 and D78 each contribute to the Mg(2+) site. Residues C92 and C99 each contribute to the Zn(2+) site.

This sequence belongs to the PRA-CH family. As to quaternary structure, homodimer. Mg(2+) is required as a cofactor. Zn(2+) serves as cofactor.

The protein localises to the cytoplasm. The catalysed reaction is 1-(5-phospho-beta-D-ribosyl)-5'-AMP + H2O = 1-(5-phospho-beta-D-ribosyl)-5-[(5-phospho-beta-D-ribosylamino)methylideneamino]imidazole-4-carboxamide. It functions in the pathway amino-acid biosynthesis; L-histidine biosynthesis; L-histidine from 5-phospho-alpha-D-ribose 1-diphosphate: step 3/9. Functionally, catalyzes the hydrolysis of the adenine ring of phosphoribosyl-AMP. This Trichlorobacter lovleyi (strain ATCC BAA-1151 / DSM 17278 / SZ) (Geobacter lovleyi) protein is Phosphoribosyl-AMP cyclohydrolase.